We begin with the raw amino-acid sequence, 949 residues long: General transcription factor II-I repeat domain-containing protein 2B (949 aa).

GTF2I-like repeat units follow at residues 98 to 192 (QVHS…QLGG) and 323 to 417 (LSSI…SNVG).

It belongs to the TFII-I family. As to expression, ubiquitous.

Its subcellular location is the nucleus. The chain is General transcription factor II-I repeat domain-containing protein 2B (GTF2IRD2B) from Homo sapiens (Human).